We begin with the raw amino-acid sequence, 159 residues long: Sulfur carrier protein DsrE2 (159 aa).

The next 2 membrane-spanning stretches (helical) occupy residues 21 to 43 (PFILASTAAALGYEVQVFFTFYG) and 72 to 91 (WFPVLGLALPGMQGMMTAMM).

Its subcellular location is the cell membrane. Its pathway is energy metabolism; sulfur metabolism. In terms of biological role, sulfur carrier protein probably involved in sulfur trafficking for oxidative dissimilatory sulfur metabolism. May be a component of a cytoplasmic sulfur relay system delivering sulfur to DsrC. Binds sulfur in the presence of sulfide in vitro. This Allochromatium vinosum (strain ATCC 17899 / DSM 180 / NBRC 103801 / NCIMB 10441 / D) (Chromatium vinosum) protein is Sulfur carrier protein DsrE2.